We begin with the raw amino-acid sequence, 624 residues long: 1-deoxy-D-xylulose-5-phosphate synthase (624 aa).

Thiamine diphosphate-binding positions include His-74 and 115–117 (GHS). Asp-146 lines the Mg(2+) pocket. Thiamine diphosphate contacts are provided by residues 147-148 (GA), Asn-175, Tyr-286, and Glu-367. Position 175 (Asn-175) interacts with Mg(2+).

Belongs to the transketolase family. DXPS subfamily. In terms of assembly, homodimer. Mg(2+) serves as cofactor. Thiamine diphosphate is required as a cofactor.

The catalysed reaction is D-glyceraldehyde 3-phosphate + pyruvate + H(+) = 1-deoxy-D-xylulose 5-phosphate + CO2. The protein operates within metabolic intermediate biosynthesis; 1-deoxy-D-xylulose 5-phosphate biosynthesis; 1-deoxy-D-xylulose 5-phosphate from D-glyceraldehyde 3-phosphate and pyruvate: step 1/1. In terms of biological role, catalyzes the acyloin condensation reaction between C atoms 2 and 3 of pyruvate and glyceraldehyde 3-phosphate to yield 1-deoxy-D-xylulose-5-phosphate (DXP). The polypeptide is 1-deoxy-D-xylulose-5-phosphate synthase (Alkaliphilus oremlandii (strain OhILAs) (Clostridium oremlandii (strain OhILAs))).